Here is a 268-residue protein sequence, read N- to C-terminus: Helix-loop-helix protein 6 (268 aa).

The segment covering 117–130 has biased composition (low complexity); sequence QSQVQPQLPTQSQP. The segment at 117 to 140 is disordered; the sequence is QSQVQPQLPTQSQPKPSSKASLDT. A compositionally biased stretch (polar residues) spans 131–140; it reads KPSSKASLDT. The 53-residue stretch at 173-225 folds into the bHLH domain; that stretch reads SSVWKRNERERCRVRNVNDGYERLRKHLPVHFDEKRISKVDTLRLAIRYIKHL.

As to expression, expressed in the gland cells of the pharynx and weakly in the pharyngeal neuron.

The protein localises to the nucleus. Functionally, transcription factor that regulates the development of the g2 pharyngeal gland cells and pharyngeal gland function and thereby is required for feeding. Required for the expression of a number of genes in the pharyngeal gland, possibly by binding to the E box motif (5'-CANNTG-3') in the promoter region of these genes. Positively regulates the expression of genes encoding mucin-like proteins, which lubricate the pharyngeal tract to ensure efficient passage of the bacterial food source. Exhibits pharyngeal gland-specific positive autoregulation activity. This chain is Helix-loop-helix protein 6 (hlh-6), found in Caenorhabditis elegans.